We begin with the raw amino-acid sequence, 214 residues long: Large ribosomal subunit protein eL14 (214 aa).

Lys79 carries the N6-acetyllysine modification. Lys85 bears the N6-acetyllysine; alternate mark. Lys85 carries the N6-succinyllysine; alternate modification. Lys124 is covalently cross-linked (Glycyl lysine isopeptide (Lys-Gly) (interchain with G-Cter in SUMO2)). Ser139 bears the Phosphoserine mark. The tract at residues 161-214 (PAKKITTEGKKAPAQKAPAQKAAGQKAAPPPKTQKGQKAPSQKAPAPKASGKKA) is disordered. The stretch at 170-174 (KKAPA) is one 1-1; approximate repeat. The interval 170–189 (KKAPAQKAPAQKAAGQKAAP) is 4 X 5 AA tandem repeats of Q-K-A-[APS]-X. A compositionally biased stretch (low complexity) spans 172–214 (APAQKAPAQKAAGQKAAPPPKTQKGQKAPSQKAPAPKASGKKA). 5 repeat units span residues 175-179 (QKAPA), 180-184 (QKAAG), 185-189 (QKAAP), 192-194 (KTQ), and 195-197 (KGQ). A 2 X 3 AA tandem repeats of K-G-Q region spans residues 192–197 (KTQKGQ). At Lys203 the chain carries N6-succinyllysine.

Belongs to the eukaryotic ribosomal protein eL14 family. Component of the large ribosomal subunit.

The protein localises to the cytoplasm. Component of the large ribosomal subunit. The ribosome is a large ribonucleoprotein complex responsible for the synthesis of proteins in the cell. The protein is Large ribosomal subunit protein eL14 (RPL14) of Bos taurus (Bovine).